Reading from the N-terminus, the 466-residue chain is Uronate isomerase (466 aa).

Belongs to the metallo-dependent hydrolases superfamily. Uronate isomerase family.

It catalyses the reaction D-glucuronate = D-fructuronate. The enzyme catalyses aldehydo-D-galacturonate = keto-D-tagaturonate. The protein operates within carbohydrate metabolism; pentose and glucuronate interconversion. This chain is Uronate isomerase, found in Brucella suis (strain ATCC 23445 / NCTC 10510).